The chain runs to 320 residues: Cytochrome f (320 aa).

Residues 1 to 35 (MENRKTFSWLKEQMIRSISVSIMIYVITRTSISNA) form the signal peptide. Residues Y36, C56, C59, and H60 each contribute to the heme site. Residues 286 to 305 (VQGLLFFFASVILAQVFLVL) traverse the membrane as a helical segment.

This sequence belongs to the cytochrome f family. As to quaternary structure, the 4 large subunits of the cytochrome b6-f complex are cytochrome b6, subunit IV (17 kDa polypeptide, petD), cytochrome f and the Rieske protein, while the 4 small subunits are PetG, PetL, PetM and PetN. The complex functions as a dimer. The cofactor is heme.

It localises to the plastid. The protein resides in the chloroplast thylakoid membrane. In terms of biological role, component of the cytochrome b6-f complex, which mediates electron transfer between photosystem II (PSII) and photosystem I (PSI), cyclic electron flow around PSI, and state transitions. The polypeptide is Cytochrome f (petA) (Zea mays (Maize)).